Consider the following 716-residue polypeptide: ATP-dependent zinc metalloprotease FTSH 1, chloroplastic (716 aa).

The transit peptide at Met1–Arg48 directs the protein to the chloroplast. A thylakoid-targeting transit peptide spans Ser49 to Ala86. Residues Phe204–Phe224 traverse the membrane as a helical segment. Gly302–Thr309 serves as a coordination point for ATP. His524 is a binding site for Zn(2+). Residue Glu525 is part of the active site. Zn(2+) contacts are provided by His528 and Asp605.

It in the N-terminal section; belongs to the AAA ATPase family. In the C-terminal section; belongs to the peptidase M41 family. Interacts with CHIP and HSP70. Heterohexamers with FTSH2, FTSH5 and FTSH8. The cofactor is Zn(2+). In terms of processing, the FTSH1 precursor is ubiquitinated by CHIP in the cytoplasm. In terms of tissue distribution, ubiquitous.

It localises to the plastid. The protein localises to the chloroplast thylakoid membrane. In terms of biological role, part of a complex that function as an ATP-dependent zinc metallopeptidase. Involved in the thylakoid formation and in the removal of damaged D1 in the photosystem II, preventing cell death under high-intensity light conditions. The polypeptide is ATP-dependent zinc metalloprotease FTSH 1, chloroplastic (FTSH1) (Arabidopsis thaliana (Mouse-ear cress)).